We begin with the raw amino-acid sequence, 427 residues long: Actin-related protein 3 (427 aa).

This sequence belongs to the actin family. ARP3 subfamily. Component of the Arp2/3 complex composed of arp2, act2, arc1/p41-ARC, arc2/p34-ARC, arc3/p21-ARC, arc4/p20-ARC and arc5/p16-ARC.

It localises to the cytoplasm. Its subcellular location is the cytoskeleton. The protein localises to the actin patch. Functionally, functions as ATP-binding component of the Arp2/3 complex which is involved in regulation of actin polymerization and together with an activating nucleation-promoting factor (NPF) mediates the formation of branched actin networks. Seems to contact the pointed end of the daughter actin filament. May be involved in cytokinesis. The polypeptide is Actin-related protein 3 (act2) (Schizosaccharomyces pombe (strain 972 / ATCC 24843) (Fission yeast)).